The sequence spans 84 residues: Large ribosomal subunit protein bL27 (84 aa).

A disordered region spans residues 1-22 (MAHKKAGGSTRNGRDSESKRLG).

It belongs to the bacterial ribosomal protein bL27 family.

The polypeptide is Large ribosomal subunit protein bL27 (Shewanella woodyi (strain ATCC 51908 / MS32)).